Here is a 750-residue protein sequence, read N- to C-terminus: Polyribonucleotide nucleotidyltransferase (750 aa).

Positions 519 and 525 each coordinate Mg(2+). A KH domain is found at 585–644 (PRVIAVKIPVDKIGEVIGPKGKMINQIQEDTGADISIEDDGTVYIGATNGPSADAARSAI). Positions 656–728 (GERYLGTVVK…DRGKLSLSPV (73 aa)) constitute an S1 motif domain. Residues 725-750 (LSPVVAEEEGAASEDAPAEAAEESAE) are disordered. Acidic residues predominate over residues 730–750 (AEEEGAASEDAPAEAAEESAE).

The protein belongs to the polyribonucleotide nucleotidyltransferase family. It depends on Mg(2+) as a cofactor.

It localises to the cytoplasm. It catalyses the reaction RNA(n+1) + phosphate = RNA(n) + a ribonucleoside 5'-diphosphate. Its function is as follows. Involved in mRNA degradation. Catalyzes the phosphorolysis of single-stranded polyribonucleotides processively in the 3'- to 5'-direction. In Paenarthrobacter aurescens (strain TC1), this protein is Polyribonucleotide nucleotidyltransferase.